Consider the following 88-residue polypeptide: Small ribosomal subunit protein bS18B (88 aa).

It belongs to the bacterial ribosomal protein bS18 family. As to quaternary structure, part of the 30S ribosomal subunit. Forms a tight heterodimer with protein bS6.

Binds as a heterodimer with protein bS6 to the central domain of the 16S rRNA, where it helps stabilize the platform of the 30S subunit. The chain is Small ribosomal subunit protein bS18B from Roseiflexus castenholzii (strain DSM 13941 / HLO8).